The following is a 102-amino-acid chain: Omega-hexatoxin-Hi2a (102 aa).

Positions 1–23 (MKFSKLSLTLALILTQALLVVCG) are cleaved as a signal peptide. The propeptide occupies 24–56 (KINEDFMENGLESHALHDEIRKPIDTEKADAER). 3 cysteine pairs are disulfide-bonded: Cys-61–Cys-75, Cys-68–Cys-81, and Cys-74–Cys-86. Leu-98 carries the post-translational modification Leucine amide. A propeptide spanning residues 100–102 (RAL) is cleaved from the precursor.

The protein belongs to the neurotoxin 15 family. 02 (omega-actx) subfamily. As to expression, expressed by the venom gland.

It localises to the secreted. Potent inhibitor of insect, but not mammalian, voltage-gated calcium channels (Cav). This is Omega-hexatoxin-Hi2a from Hadronyche infensa (Fraser island funnel-web spider).